A 179-amino-acid chain; its full sequence is Apoptosis regulator Bcl-2 homolog (179 aa).

The BH1 motif lies at 76 to 95 (ELFKDLINWGRICGFIVFSA). The BH2 signature appears at 126 to 141 (PWMISHGGQEEFLAFS).

Belongs to the Bcl-2 family. Interacts with host BECN1 (via BH3 homology domain); this interaction allows the virus to inhibit BECN1, and thus autophagy. Interacts with host BID. Interacts with host BAX.

The protein resides in the host mitochondrion. It is found in the host endoplasmic reticulum. Suppresses apoptosis in host cell to promote the viral replication. Has the ability to potentially bind to all the members of the proapoptotic Bcl-2 family. Inhibits autophagy by interacting with host Beclin 1 (BECN1). The polypeptide is Apoptosis regulator Bcl-2 homolog (African swine fever virus (isolate Pig/Kenya/KEN-50/1950) (ASFV)).